The following is a 584-amino-acid chain: High-affinity choline transporter 1 (584 aa).

The Extracellular portion of the chain corresponds to 1–6; it reads MTVHID. A helical membrane pass occupies residues 7–27; it reads GIVAIVLFYLLILFVGLWAAW. Topologically, residues 28-50 are cytoplasmic; sequence KSKNTSMEGAMDRSEAIMIGGRD. Residues 51–71 form a helical membrane-spanning segment; that stretch reads IGLLVGGFTMTATWVGGGYIN. Residues 72 to 83 lie on the Extracellular side of the membrane; the sequence is GTAEAVYVPGYG. The helical transmembrane segment at 84-104 threads the bilayer; it reads LAWAQAPFGYALSLVIGGLFF. Residues 105–127 are Cytoplasmic-facing; the sequence is AKPMRSRGYVTMLDPFQQMYGKR. A helical membrane pass occupies residues 128-148; sequence MGGLLFIPALLGEIFWSAAIL. The Extracellular segment spans residues 149-166; it reads SALGATLSVIVDININVS. A helical transmembrane segment spans residues 167–187; the sequence is VVVSAVIAVLYTLVGGLYSVA. At 188-193 the chain is on the cytoplasmic side; that stretch reads YTDVVQ. A helical transmembrane segment spans residues 194-214; it reads LFCIFLGLWISIPFALLNPAV. Topologically, residues 215–239 are extracellular; sequence TDIIVTANQEVYQEPWVGNIQSKDS. A helical membrane pass occupies residues 240-260; the sequence is LIWIDNFLLLMLGGIPWQVYF. Over 261–276 the chain is Cytoplasmic; that stretch reads QRVLSASSATYAQVLS. The helical transmembrane segment at 277 to 297 threads the bilayer; sequence FLAAFGCVLMAIPSVLIGAIG. The Extracellular segment spans residues 298 to 319; the sequence is TSTDWNQTSYGLPGPIGKNETD. Residue asparagine 303 is glycosylated (N-linked (GlcNAc...) asparagine). The chain crosses the membrane as a helical span at residues 320–340; it reads MILPIVLQHLCPPYISFFGLG. The Cytoplasmic portion of the chain corresponds to 341 to 378; the sequence is AVSAAVMSSADSSILSASSMFARNIYHLAFRQEASDKE. The helical transmembrane segment at 379–399 threads the bilayer; the sequence is IVWVMRITIFLFGGAATSMAL. The Extracellular portion of the chain corresponds to 400–408; sequence LAQSIYGLW. The helical transmembrane segment at 409-429 threads the bilayer; the sequence is YLSSDLVYVIIFPQLISVLFV. Over 430–437 the chain is Cytoplasmic; it reads KGTNTYGS. Residues 438 to 458 form a helical membrane-spanning segment; that stretch reads IAGYIIGFLLRISGGEPYLHM. At 459–487 the chain is on the extracellular side; the sequence is QPFIYYPGCYLDHSFGDDPVYVQRFPFKT. A helical membrane pass occupies residues 488 to 508; it reads MAMLFSFLGNTGVSYLVKYLF. At 509-584 the chain is on the cytoplasmic side; that stretch reads VSGILPPKLD…NPELSKSGND (76 aa).

The protein belongs to the sodium:solute symporter (SSF) (TC 2.A.21) family. Post-translationally, phosphorylated. Specific for cholinergic neurons.

Its subcellular location is the membrane. Imports choline from the extracellular space to the neuron with high affinity. Rate-limiting step in acetylcholine synthesis. Sodium ion and chloride ion dependent. This is High-affinity choline transporter 1 (CHT1) from Torpedo marmorata (Marbled electric ray).